The primary structure comprises 377 residues: P2Y purinoceptor 2 (377 aa).

Topologically, residues 1-32 (MAADLGPWNDTINGTWDGDELGYRCRFNEDFK) are extracellular. N-linked (GlcNAc...) asparagine glycosylation is found at asparagine 9 and asparagine 13. Residues 33–59 (YVLLPVSYGVVCVPGLCLNAVALYIFL) traverse the membrane as a helical segment. Over 60 to 70 (CRLKTWNASTT) the chain is Cytoplasmic. A helical transmembrane segment spans residues 71–93 (YMFHLAVSDALYAASLPLLVYYY). At 94–110 (ARGDHWPFSTVLCKLVR) the chain is on the extracellular side. A disulfide bridge links cysteine 106 with cysteine 183. Residues 111–129 (FLFYTNLYCSILFLTCISV) traverse the membrane as a helical segment. Residues 130–152 (HRCLGVLRPLRSLRWGRARYARR) are Cytoplasmic-facing. Residues 153 to 172 (VAGAVWVLVLACQAPVLYFV) form a helical membrane-spanning segment. Residues 173–194 (TTSARGGRVTCHDTSAPELFSR) lie on the Extracellular side of the membrane. The helical transmembrane segment at 195 to 220 (FVAYSSVMLGLLFAVPFAVILVCYVL) threads the bilayer. Residues 221 to 246 (MARRLLKPAYGTSGGLPRAKRKSVRT) are Cytoplasmic-facing. A helical transmembrane segment spans residues 247 to 269 (IAVVLAVFALCFLPFHVTRTLYY). The Extracellular segment spans residues 270-287 (SFRSLDLSCHTLNAINMA). Residues 288–309 (YKVTRPLASANSCLDPVLYFLA) traverse the membrane as a helical segment. The Cytoplasmic segment spans residues 310–377 (GQRLVRFARD…GSENTKDIRL (68 aa)). Positions 318 to 377 (RDAKPPTGPSPATPARRRLGLRRSDRTDMQRIEDVLGSSEDSRRTESTPAGSENTKDIRL) are disordered. Positions 339–363 (RRSDRTDMQRIEDVLGSSEDSRRTE) are enriched in basic and acidic residues.

The protein belongs to the G-protein coupled receptor 1 family. In terms of tissue distribution, spleen, testis, kidney, liver, lung, heart and brain.

It is found in the cell membrane. Receptor for ATP and UTP coupled to G-proteins that activate a phosphatidylinositol-calcium second messenger system. The affinity range is UTP = ATP &gt; ATP-gamma-S &gt;&gt; 2-methylthio-ATP = ADP. This chain is P2Y purinoceptor 2 (P2RY2), found in Homo sapiens (Human).